The primary structure comprises 332 residues: Holliday junction branch migration complex subunit RuvB (332 aa).

The segment at methionine 1 to tyrosine 181 is large ATPase domain (RuvB-L). ATP is bound by residues leucine 20, arginine 21, glycine 62, lysine 65, threonine 66, threonine 67, glutamate 128–phenylalanine 130, arginine 171, tyrosine 181, and arginine 218. Threonine 66 lines the Mg(2+) pocket. The small ATPAse domain (RuvB-S) stretch occupies residues alanine 182–aspartate 252. The tract at residues histidine 255–lysine 332 is head domain (RuvB-H). Residues arginine 291, arginine 310, arginine 312, and arginine 315 each coordinate DNA.

The protein belongs to the RuvB family. In terms of assembly, homohexamer. Forms an RuvA(8)-RuvB(12)-Holliday junction (HJ) complex. HJ DNA is sandwiched between 2 RuvA tetramers; dsDNA enters through RuvA and exits via RuvB. An RuvB hexamer assembles on each DNA strand where it exits the tetramer. Each RuvB hexamer is contacted by two RuvA subunits (via domain III) on 2 adjacent RuvB subunits; this complex drives branch migration. In the full resolvosome a probable DNA-RuvA(4)-RuvB(12)-RuvC(2) complex forms which resolves the HJ.

The protein resides in the cytoplasm. The enzyme catalyses ATP + H2O = ADP + phosphate + H(+). In terms of biological role, the RuvA-RuvB-RuvC complex processes Holliday junction (HJ) DNA during genetic recombination and DNA repair, while the RuvA-RuvB complex plays an important role in the rescue of blocked DNA replication forks via replication fork reversal (RFR). RuvA specifically binds to HJ cruciform DNA, conferring on it an open structure. The RuvB hexamer acts as an ATP-dependent pump, pulling dsDNA into and through the RuvAB complex. RuvB forms 2 homohexamers on either side of HJ DNA bound by 1 or 2 RuvA tetramers; 4 subunits per hexamer contact DNA at a time. Coordinated motions by a converter formed by DNA-disengaged RuvB subunits stimulates ATP hydrolysis and nucleotide exchange. Immobilization of the converter enables RuvB to convert the ATP-contained energy into a lever motion, pulling 2 nucleotides of DNA out of the RuvA tetramer per ATP hydrolyzed, thus driving DNA branch migration. The RuvB motors rotate together with the DNA substrate, which together with the progressing nucleotide cycle form the mechanistic basis for DNA recombination by continuous HJ branch migration. Branch migration allows RuvC to scan DNA until it finds its consensus sequence, where it cleaves and resolves cruciform DNA. This chain is Holliday junction branch migration complex subunit RuvB, found in Streptococcus pneumoniae serotype 2 (strain D39 / NCTC 7466).